We begin with the raw amino-acid sequence, 753 residues long: Inactive protein-tyrosine phosphatase egg-5 (753 aa).

Disordered stretches follow at residues Thr-26–Asn-46 and Arg-77–Pro-116. The segment covering Asn-35–Asn-46 has biased composition (low complexity). Residues Ala-84–Leu-94 show a composition bias toward basic and acidic residues. One can recognise a Tyrosine-protein phosphatase domain in the interval Met-408–Phe-661.

This sequence belongs to the protein-tyrosine phosphatase family. In terms of assembly, part of a complex, consisting of pseudophosphatases egg-3, egg-4, egg-5 and kinase mbk-2; this complex is required for the oocyte-to-zygote transition. Interacts (via tyrosine-protein phosphatase domain) with kinase mbk-2 (via 'Tyr-619' and 'Tyr-621'); mbk-2 tyrosine phosphorylation enhances the interaction.

It is found in the cytoplasm. It localises to the cell cortex. Its function is as follows. Inactive phosphatase which acts redundantly with egg-4 in the oocyte-to-zygote transition. Required for polarized cortical actin cytoskeleton rearrangement in the oocyte before and after fertilization. Together with egg-4, required for the cortical localization of kinase mbk-2 in maturing oocyte until the end of meiosis I. Also required for kinase mbk-2, pseudophosphatase egg-3 and chitin synthase chs-1 localization to cytoplasmic foci after fertilization. This is Inactive protein-tyrosine phosphatase egg-5 from Caenorhabditis elegans.